We begin with the raw amino-acid sequence, 179 residues long: Large ribosomal subunit protein uL5 (179 aa).

The protein belongs to the universal ribosomal protein uL5 family. In terms of assembly, part of the 50S ribosomal subunit; part of the 5S rRNA/L5/L18/L25 subcomplex. Contacts the 5S rRNA and the P site tRNA. Forms a bridge to the 30S subunit in the 70S ribosome.

Its function is as follows. This is one of the proteins that bind and probably mediate the attachment of the 5S RNA into the large ribosomal subunit, where it forms part of the central protuberance. In the 70S ribosome it contacts protein S13 of the 30S subunit (bridge B1b), connecting the 2 subunits; this bridge is implicated in subunit movement. Contacts the P site tRNA; the 5S rRNA and some of its associated proteins might help stabilize positioning of ribosome-bound tRNAs. The chain is Large ribosomal subunit protein uL5 from Vibrio atlanticus (strain LGP32) (Vibrio splendidus (strain Mel32)).